Here is a 62-residue protein sequence, read N- to C-terminus: Large ribosomal subunit protein bL28 (62 aa).

Residues 1 to 27 are disordered; sequence MAKECVITGRKSRSGNKRSHAMNSSKR. Over residues 10–20 the composition is skewed to basic residues; sequence RKSRSGNKRSH.

The protein belongs to the bacterial ribosomal protein bL28 family.

The polypeptide is Large ribosomal subunit protein bL28 (Listeria innocua serovar 6a (strain ATCC BAA-680 / CLIP 11262)).